The primary structure comprises 106 residues: Putative protein LRRC37A5P (106 aa).

In Homo sapiens (Human), this protein is Putative protein LRRC37A5P (LRRC37A5P).